Here is a 391-residue protein sequence, read N- to C-terminus: Digeranylgeranylglycerophospholipid reductase (391 aa).

Residues Gly13, Glu32, Cys43, Ala44, Gly46, Arg97, Ala121, Asp277, Gly289, and Ile290 each coordinate FAD.

Belongs to the geranylgeranyl reductase family. DGGGPL reductase subfamily. FAD serves as cofactor.

It catalyses the reaction a 2,3-bis-O-phytanyl-sn-glycerol 1-phospholipid + 8 oxidized 2[4Fe-4S]-[ferredoxin] = a 2,3-bis-O-(geranylgeranyl)-sn-glycerol 1-phospholipid + 8 reduced 2[4Fe-4S]-[ferredoxin] + 16 H(+). It carries out the reaction 2,3-bis-O-(phytanyl)-sn-glycerol 1-phosphate + 8 oxidized 2[4Fe-4S]-[ferredoxin] = 2,3-bis-O-(geranylgeranyl)-sn-glycerol 1-phosphate + 8 reduced 2[4Fe-4S]-[ferredoxin] + 16 H(+). The catalysed reaction is a 2,3-bis-O-phytanyl-sn-glycerol 1-phospholipid + 8 A = a 2,3-bis-O-(geranylgeranyl)-sn-glycerol 1-phospholipid + 8 AH2. The enzyme catalyses CDP-2,3-bis-O-(geranylgeranyl)-sn-glycerol + 8 AH2 = CDP-2,3-bis-O-(phytanyl)-sn-glycerol + 8 A. It catalyses the reaction archaetidylserine + 8 AH2 = 2,3-bis-O-phytanyl-sn-glycero-3-phospho-L-serine + 8 A. It participates in membrane lipid metabolism; glycerophospholipid metabolism. Is involved in the reduction of 2,3-digeranylgeranylglycerophospholipids (unsaturated archaeols) into 2,3-diphytanylglycerophospholipids (saturated archaeols) in the biosynthesis of archaeal membrane lipids. Catalyzes the formation of archaetidic acid (2,3-di-O-phytanyl-sn-glyceryl phosphate) from 2,3-di-O-geranylgeranylglyceryl phosphate (DGGGP) via the hydrogenation of each double bond of the isoprenoid chains. Is also probably able to reduce double bonds of geranyl groups in CDP-2,3-bis-O-(geranylgeranyl)-sn-glycerol and archaetidylserine, thus acting at various stages in the biosynthesis of archaeal membrane lipids. The polypeptide is Digeranylgeranylglycerophospholipid reductase (Methanothrix thermoacetophila (strain DSM 6194 / JCM 14653 / NBRC 101360 / PT) (Methanosaeta thermophila)).